The following is a 323-amino-acid chain: Tetraacyldisaccharide 4'-kinase (323 aa).

56-63 is an ATP binding site; that stretch reads TVGGVGKT.

The protein belongs to the LpxK family.

The catalysed reaction is a lipid A disaccharide + ATP = a lipid IVA + ADP + H(+). Its pathway is glycolipid biosynthesis; lipid IV(A) biosynthesis; lipid IV(A) from (3R)-3-hydroxytetradecanoyl-[acyl-carrier-protein] and UDP-N-acetyl-alpha-D-glucosamine: step 6/6. In terms of biological role, transfers the gamma-phosphate of ATP to the 4'-position of a tetraacyldisaccharide 1-phosphate intermediate (termed DS-1-P) to form tetraacyldisaccharide 1,4'-bis-phosphate (lipid IVA). This Legionella pneumophila (strain Corby) protein is Tetraacyldisaccharide 4'-kinase.